The following is a 65-amino-acid chain: Large ribosomal subunit protein bL33c (65 aa).

It belongs to the bacterial ribosomal protein bL33 family.

Its subcellular location is the plastid. It is found in the chloroplast. In Porphyra purpurea (Red seaweed), this protein is Large ribosomal subunit protein bL33c (rpl33).